We begin with the raw amino-acid sequence, 403 residues long: Coenzyme A biosynthesis bifunctional protein CoaBC (403 aa).

A phosphopantothenoylcysteine decarboxylase region spans residues 1–197; sequence MISEIMHPTK…GNNLKKEGNR (197 aa). The tract at residues 198-403 is phosphopantothenate--cysteine ligase; sequence VLILNGGTVE…VEKVKKLVKS (206 aa). Positions 285, 294, and 327 each coordinate CTP.

In the N-terminal section; belongs to the HFCD (homo-oligomeric flavin containing Cys decarboxylase) superfamily. This sequence in the C-terminal section; belongs to the PPC synthetase family. Homododecamer. The CoaC domain is responsible for dodecamer formation. Mg(2+) serves as cofactor. It depends on FMN as a cofactor.

It catalyses the reaction N-[(R)-4-phosphopantothenoyl]-L-cysteine + H(+) = (R)-4'-phosphopantetheine + CO2. The catalysed reaction is (R)-4'-phosphopantothenate + L-cysteine + CTP = N-[(R)-4-phosphopantothenoyl]-L-cysteine + CMP + diphosphate + H(+). It participates in cofactor biosynthesis; coenzyme A biosynthesis. Catalyzes two sequential steps in the biosynthesis of coenzyme A. In the first step cysteine is conjugated to 4'-phosphopantothenate to form 4-phosphopantothenoylcysteine. In the second step the latter compound is decarboxylated to form 4'-phosphopantotheine. The sequence is that of Coenzyme A biosynthesis bifunctional protein CoaBC from Methanocaldococcus jannaschii (strain ATCC 43067 / DSM 2661 / JAL-1 / JCM 10045 / NBRC 100440) (Methanococcus jannaschii).